The following is a 423-amino-acid chain: Subtilisin-like protease 2 (423 aa).

Residues 1–17 (MQLLNLGLLLLLPFVAG) form the signal peptide. The propeptide occupies 18-123 (EIAPQPEPLR…VHPDQHVYLA (106 aa)). The 87-residue stretch at 37–123 (QYIVTLKEGL…VHPDQHVYLA (87 aa)) folds into the Inhibitor I9 domain. In terms of domain architecture, Peptidase S8 spans 132–423 (RWGLGYMSSK…RKFTLPKNTK (292 aa)). Residues aspartate 170 and histidine 202 each act as charge relay system in the active site. 3 N-linked (GlcNAc...) asparagine glycosylation sites follow: asparagine 249, asparagine 262, and asparagine 349. Serine 358 (charge relay system) is an active-site residue. Asparagine 389 is a glycosylation site (N-linked (GlcNAc...) asparagine).

This sequence belongs to the peptidase S8 family.

The protein localises to the secreted. Functionally, secreted subtilisin-like serine protease with keratinolytic activity that contributes to pathogenicity. The protein is Subtilisin-like protease 2 (SUB2) of Arthroderma otae (strain ATCC MYA-4605 / CBS 113480) (Microsporum canis).